We begin with the raw amino-acid sequence, 914 residues long: Serine/threonine-protein kinase MST20 (914 aa).

Residues 1–12 (MDGHSNFTQPSD) show a composition bias toward polar residues. 3 disordered regions span residues 1–140 (MDGH…QLQN), 156–184 (NQYSAASHRRSNSYGHPHGPQSSNSLTFN), and 251–286 (AMSEKSQQVRGMEAQLPTSKRYSDETKEPKPGVLRK). Low complexity-rich tracts occupy residues 13 to 26 (TSHASHTIPSSSSS), 63 to 72 (RSSTSLRRAP), and 79 to 97 (TPTSTHASNSSSPRNPSSS). Over residues 122–136 (ARDRDSDPARNDHGH) the composition is skewed to basic and acidic residues. Residues 156–166 (NQYSAASHRRS) show a composition bias toward basic residues. Polar residues predominate over residues 175-184 (PQSSNSLTFN). Positions 271 to 280 (RYSDETKEPK) are enriched in basic and acidic residues. In terms of domain architecture, CRIB spans 306 to 319 (ISAPENPVHVTHVG). The disordered stretch occupies residues 408–615 (SPMISPPASP…RHRSRQSNGL (208 aa)). 2 stretches are compositionally biased toward low complexity: residues 516–548 (AYPASQQSPAVQAAYQQQLMQQQQEQALAQAQA) and 562–576 (QPQAQQPTPPQSQHQ). A compositionally biased stretch (polar residues) spans 577-586 (YSRPTDANGA). A compositionally biased stretch (low complexity) spans 587–596 (QQTQRPQQPQ). The 252-residue stretch at 634–885 (YRSFTKIGQG…AHDLLRHEFM (252 aa)) folds into the Protein kinase domain. ATP contacts are provided by residues 640 to 648 (IGQGASGGV) and K663. Catalysis depends on D753, which acts as the Proton acceptor.

This sequence belongs to the protein kinase superfamily. STE Ser/Thr protein kinase family. STE20 subfamily.

The protein resides in the cytoplasm. It is found in the nucleus. The catalysed reaction is L-seryl-[protein] + ATP = O-phospho-L-seryl-[protein] + ADP + H(+). It carries out the reaction L-threonyl-[protein] + ATP = O-phospho-L-threonyl-[protein] + ADP + H(+). Its function is as follows. MAP4K component of the MAPK pathway required for the mating pheromone response and the regulation of cell polarity and cell cycle. Phosphorylates histone H2B to form H2BS10ph. Is involved in conidiation, aerial hyphal growth and infection-related morphogenesis. In Pyricularia oryzae (strain 70-15 / ATCC MYA-4617 / FGSC 8958) (Rice blast fungus), this protein is Serine/threonine-protein kinase MST20 (MST20).